The sequence spans 439 residues: Ectonucleotide pyrophosphatase/phosphodiesterase family member 7 (439 aa).

A signal peptide spans 1 to 21 (MGHSAVLLSVALVILPACVTG). Residues 22–422 (GPVQRQQQHK…RSGSPLSRQH (401 aa)) are Extracellular-facing. D38 and T74 together coordinate Zn(2+). The segment at 71-77 (VTMTSPC) is required for enzyme activity. T74 functions as the Nucleophile in the catalytic mechanism. A substrate-binding site is contributed by N95. N-linked (GlcNAc...) asparagine glycosylation is found at N99, N120, N145, and N167. Zn(2+) contacts are provided by D198, H202, D245, and H246. N266 carries N-linked (GlcNAc...) asparagine glycosylation. H352 contributes to the Zn(2+) binding site. A helical membrane pass occupies residues 423–439 (HLVVVLMGILTGLAKVV).

It belongs to the nucleotide pyrophosphatase/phosphodiesterase family. Zn(2+) serves as cofactor. In terms of processing, N-glycosylated; required for activity and transport to the plasma membrane. Detected in small intestine (at protein level). Highly expressed in the jejunum.

Its subcellular location is the cell membrane. It catalyses the reaction a sphingomyelin + H2O = phosphocholine + an N-acylsphing-4-enine + H(+). The enzyme catalyses a 1-O-alkyl-2-acetyl-sn-glycero-3-phosphocholine + H2O = a 1-O-alkyl-2-acetyl-sn-glycerol + phosphocholine + H(+). It carries out the reaction 1-O-octadecyl-2-acetyl-sn-glycero-3-phosphocholine + H2O = 1-O-octadecyl-2-acetyl-sn-glycerol + phosphocholine + H(+). The catalysed reaction is 1-hexadecanoyl-sn-glycero-3-phosphocholine + H2O = 1-hexadecanoyl-sn-glycerol + phosphocholine + H(+). Platelet-activating factor hydrolysis is inhibited by higher amount of sphingomyelin. The hydrolysis of platelet-activating factor and sphingomyelin can be inhibited by the presence of sphingomyelin and platelet-activating factor respectively, the inhibition of platelet-activating factor hydrolysis by sphingomyelin being stronger. PAF hydrolysis is dose-dependently increased by both taurocholate (TC) and taurodeoxycholate (TDC). Hydrolase activity against PAF is inhibited by EDTA and stimulated by 0.1-0.25 mM Zn2+. In terms of biological role, choline-specific phosphodiesterase that hydrolyzes sphingomyelin (SM) releasing the ceramide and phosphocholine and therefore is involved in sphingomyelin digestion, ceramide formation, and fatty acid (FA) absorption in the gastrointestinal tract. Also has phospholipase C activity and can also cleave phosphocholine from palmitoyl lyso-phosphatidylcholine and platelet-activating factor (PAF) leading to its inactivation. Does not have nucleotide pyrophosphatase activity. May promote cholesterol absorption by affecting the levels of sphingomyelin derived from either diet or endogenous sources, in the intestinal lumen. This Rattus norvegicus (Rat) protein is Ectonucleotide pyrophosphatase/phosphodiesterase family member 7.